A 599-amino-acid chain; its full sequence is Crinkler effector protein 8 (599 aa).

Residues 1–17 (MVTLFCAVVGVAGSTFP) form the signal peptide. The LQLFLAK domain stretch occupies residues 18–52 (VDINENKSVGHLKKAIKEEKMYQFPADELQLFLAK). The N-linked (GlcNAc...) asparagine glycan is linked to Asn23. The DWL domain stretch occupies residues 53-109 (AGGNAWLSSLTEDVKKLKKGEKTALVKSLTQEEKELQGEDPISECLEGMDPPKVKQI). Residues 110–116 (HVLVALP) carry the HVLVXXP motif motif. The interval 117 to 590 (PGTSSAPISD…EAAEQESQGK (474 aa)) is C-terminal D2 effector domain. Residues Ser249, Ser281, and Ser385 each carry the phosphoserine modification. Positions 289-590 (LSKKLVWSYG…EAAEQESQGK (302 aa)) constitute a Protein kinase domain. Asp470 acts as the Proton acceptor in catalysis. Residues Ser474 and Ser587 each carry the phosphoserine modification. The interval 577–599 (RFEREAAEQESQGKGVRKKHRRA) is disordered. A Host nuclear localization signal motif is present at residues 590–599 (KGVRKKHRRA).

It in the N-terminal section; belongs to the Crinkler effector family. This sequence in the C-terminal section; belongs to the protein kinase superfamily. As to quaternary structure, dimerizes in host plants. Autophosphorylated at Ser-249, Ser-281, Ser-385, Ser-474 and Ser-587. Additional serines or threonines are also targeted for phosphorylation.

Its subcellular location is the secreted. It is found in the host nucleus. The catalysed reaction is L-seryl-[protein] + ATP = O-phospho-L-seryl-[protein] + ADP + H(+). It carries out the reaction L-threonyl-[protein] + ATP = O-phospho-L-threonyl-[protein] + ADP + H(+). Secreted effector that induces cell death when expressed in host plants. Acts as a kinase and is able to autophosphorylate, however its cell death inducing ability is not a direct result of its kinase activity, but rather a consequence of the phosphorylated state of the five identified serine residues in the CRN8 protein. The polypeptide is Crinkler effector protein 8 (Phytophthora infestans (Potato late blight agent)).